A 206-amino-acid chain; its full sequence is Small ribosomal subunit protein uS5 (206 aa).

Polar residues predominate over residues 1-15; it reads MTDTPTKQEIQSKND. The disordered stretch occupies residues 1-50; sequence MTDTPTKQEIQSKNDNVPGATPVEQKKNNRNDRKRNRRGDSKNLERDSDW. Positions 38–50 are enriched in basic and acidic residues; that stretch reads RGDSKNLERDSDW. One can recognise an S5 DRBM domain in the interval 50 to 113; sequence WQERVVQIRR…SDGKKNLVRV (64 aa).

The protein belongs to the universal ribosomal protein uS5 family. Part of the 30S ribosomal subunit. Contacts proteins S4 and S8.

Its function is as follows. With S4 and S12 plays an important role in translational accuracy. Located at the back of the 30S subunit body where it stabilizes the conformation of the head with respect to the body. This is Small ribosomal subunit protein uS5 from Prochlorococcus marinus (strain MIT 9301).